A 425-amino-acid polypeptide reads, in one-letter code: Serine--tRNA ligase (425 aa).

Position 228-230 (228-230) interacts with L-serine; it reads TSE. ATP is bound at residue 259–261; the sequence is RSE. E282 contacts L-serine. 346 to 349 is an ATP binding site; it reads EISS. S384 is a binding site for L-serine.

Belongs to the class-II aminoacyl-tRNA synthetase family. Type-1 seryl-tRNA synthetase subfamily. Homodimer. The tRNA molecule binds across the dimer.

The protein localises to the cytoplasm. It carries out the reaction tRNA(Ser) + L-serine + ATP = L-seryl-tRNA(Ser) + AMP + diphosphate + H(+). It catalyses the reaction tRNA(Sec) + L-serine + ATP = L-seryl-tRNA(Sec) + AMP + diphosphate + H(+). The protein operates within aminoacyl-tRNA biosynthesis; selenocysteinyl-tRNA(Sec) biosynthesis; L-seryl-tRNA(Sec) from L-serine and tRNA(Sec): step 1/1. Functionally, catalyzes the attachment of serine to tRNA(Ser). Is also able to aminoacylate tRNA(Sec) with serine, to form the misacylated tRNA L-seryl-tRNA(Sec), which will be further converted into selenocysteinyl-tRNA(Sec). The polypeptide is Serine--tRNA ligase (Ehrlichia ruminantium (strain Gardel)).